A 299-amino-acid polypeptide reads, in one-letter code: Aspartate carbamoyltransferase catalytic subunit (299 aa).

Residues Arg54 and Thr55 each coordinate carbamoyl phosphate. Residue Lys83 coordinates L-aspartate. Residues Arg104, His132, and Gln135 each coordinate carbamoyl phosphate. Arg165 and Arg222 together coordinate L-aspartate. Residues Leu261 and Pro262 each coordinate carbamoyl phosphate.

It belongs to the aspartate/ornithine carbamoyltransferase superfamily. ATCase family. Heterooligomer of catalytic and regulatory chains.

The catalysed reaction is carbamoyl phosphate + L-aspartate = N-carbamoyl-L-aspartate + phosphate + H(+). Its pathway is pyrimidine metabolism; UMP biosynthesis via de novo pathway; (S)-dihydroorotate from bicarbonate: step 2/3. Functionally, catalyzes the condensation of carbamoyl phosphate and aspartate to form carbamoyl aspartate and inorganic phosphate, the committed step in the de novo pyrimidine nucleotide biosynthesis pathway. The protein is Aspartate carbamoyltransferase catalytic subunit of Archaeoglobus fulgidus (strain ATCC 49558 / DSM 4304 / JCM 9628 / NBRC 100126 / VC-16).